The chain runs to 125 residues: uncharacterized protein (125 aa).

The chain crosses the membrane as a helical span at residues 96 to 113; that stretch reads LFMMSIVSSYVCYITVLL.

The protein localises to the membrane. This is an uncharacterized protein from Saccharomyces cerevisiae (strain ATCC 204508 / S288c) (Baker's yeast).